The chain runs to 647 residues: Zinc transporter ZIP4 (647 aa).

The signal sequence occupies residues Met-1–Ala-22. At Ser-23–Tyr-327 the chain is on the extracellular side. 3 disulfide bridges follow: Cys-57–Cys-62, Cys-65–Cys-111, and Cys-160–Cys-195. Residues Glu-236–Pro-255 form a disordered region. N-linked (GlcNAc...) asparagine glycosylation is present at Asn-261. Cysteines 270 and 309 form a disulfide. The chain crosses the membrane as a helical span at residues Leu-328–Leu-348. At Thr-349–Tyr-359 the chain is on the cytoplasmic side. Residues Ile-360–Leu-380 traverse the membrane as a helical segment. At Thr-381–Arg-402 the chain is on the extracellular side. The chain crosses the membrane as a helical span at residues Leu-403–Leu-423. Topologically, residues Leu-424–Tyr-498 are cytoplasmic. The short motif at Leu-452 to Leu-454 is the Essential for SLC39A4 endocytosis element. The interval Glu-458 to Pro-484 is disordered. Positions Arg-460 to Arg-470 are enriched in basic and acidic residues. Residues Met-499–Ala-518 traverse the membrane as a helical segment. His-507, Asn-508, and Asp-511 together coordinate Zn(2+). Residues Phe-519–Gly-526 are Extracellular-facing. A helical transmembrane segment spans residues Leu-527–Leu-553. Zn(2+) contacts are provided by His-536, Glu-537, and His-540. The Cytoplasmic segment spans residues Ser-554–Ala-558. The chain crosses the membrane as a helical span at residues Leu-559–Val-579. Over Gly-580–Glu-586 the chain is Extracellular. The chain crosses the membrane as a helical span at residues Ala-587–Pro-607. The Cytoplasmic portion of the chain corresponds to Ala-608–Pro-617. The helical transmembrane segment at Trp-618–Leu-638 threads the bilayer. Topologically, residues Ser-639 to Phe-647 are extracellular.

The protein belongs to the ZIP transporter (TC 2.A.5) family. In terms of assembly, homodimer; homodimerization is mediated by the transmembrane domain. The extracellular N-terminal ectodomain is cleaved when cells are Zn(2+) deficient, N-terminally cleaved SLC39A4 is internalized at a faster rate. Post-translationally, under excess Zn(2+) conditions, SLC39A4 on the cell surface is rapidly endocytosed, ubiquitinated and degraded. In terms of processing, glycosylated. In terms of tissue distribution, highly expressed in kidney, small intestine, stomach, colon, jejunum and duodenum.

Its subcellular location is the cell membrane. It localises to the recycling endosome membrane. The protein resides in the apical cell membrane. The enzyme catalyses Zn(2+)(in) = Zn(2+)(out). Its activity is regulated as follows. The Zn(2+) uniporter activity is regulated by zinc availability. Extracellular acidification stimulated SLC39A4-dependent Zn(2+) uptake. Functionally, selective transporter that mediates the uptake of Zn(2+). Plays an essential role for dietary zinc uptake from small intestine. The Zn(2+) uniporter activity is regulated by zinc availability. Also exhibits polyspecific binding and transport of Cu(2+), Cd(2+) and possibly Ni(2+) but at higher concentrations. In Homo sapiens (Human), this protein is Zinc transporter ZIP4.